The sequence spans 286 residues: Phospholipase A1 (286 aa).

The signal sequence occupies residues 1-20 (MRISLACLAALCALPAGVMA). Topologically, residues 21–49 (QDASVHDKPAVRGSIIANLLQDHDNPFLL) are periplasmic. Residues 50–62 (YPYESNYLLYTWT) form a beta stranded membrane-spanning segment. Residues 63–81 (SDLNKEAIRSYDWAENARK) are Extracellular-facing. The beta stranded transmembrane segment at 82-96 (DEVKFQLSLAFPLWR) threads the bilayer. At 97-102 (GILGDN) the chain is on the periplasmic side. Residues 103–115 (SLLGASYTQKSWW) form a beta stranded membrane-spanning segment. The Extracellular segment spans residues 116 to 125 (QLSNSKESAP). S123 serves as a coordination point for Ca(2+). Residues 126–145 (FRETNYEPQLFLGFATDYQF) form a beta stranded membrane-spanning segment. Over 146–147 (AG) the chain is Periplasmic. The beta stranded transmembrane segment at 148-161 (WTLRDIEMGYNHDS) threads the bilayer. H159 serves as the catalytic Proton acceptor. The Nucleophile role is filled by S161. Topologically, residues 162-170 (NGRSDPTSR) are extracellular. Residues R164 and S169 each coordinate Ca(2+). A beta stranded transmembrane segment spans residues 171–183 (SWNRLYARLMAQN). At 184-185 (GN) the chain is on the periplasmic side. The beta stranded transmembrane segment at 186 to 195 (WLVEVKPWYV) threads the bilayer. Topologically, residues 196-213 (VGSTDDNPDITKYMGYYR) are extracellular. Residue D201 coordinates Ca(2+). A beta stranded membrane pass occupies residues 214-220 (LKVGYQL). Topologically, residues 221–222 (GE) are periplasmic. Residues 223 to 231 (AILSAQGQY) traverse the membrane as a beta stranded segment. At 232–238 (NWNTGYG) the chain is on the extracellular side. The beta stranded transmembrane segment at 239–247 (GAELGVSYP) threads the bilayer. The Periplasmic segment spans residues 248 to 252 (ITKHV). The beta stranded transmembrane segment at 253–262 (RAYTQIYSGY) threads the bilayer. Topologically, residues 263–271 (GESLIDYNF) are extracellular. Residues 272-283 (NQTRVGVGLMLN) form a beta stranded membrane-spanning segment. The Periplasmic segment spans residues 284–286 (DLF).

It belongs to the phospholipase A1 family. In terms of assembly, homodimer; dimerization is reversible, and the dimeric form is the active one. Requires Ca(2+) as cofactor.

The protein resides in the cell outer membrane. The enzyme catalyses a 1,2-diacyl-sn-glycero-3-phosphocholine + H2O = a 2-acyl-sn-glycero-3-phosphocholine + a fatty acid + H(+). It catalyses the reaction a 1,2-diacyl-sn-glycero-3-phosphocholine + H2O = a 1-acyl-sn-glycero-3-phosphocholine + a fatty acid + H(+). Functionally, hydrolysis of phosphatidylcholine with phospholipase A2 (EC 3.1.1.4) and phospholipase A1 (EC 3.1.1.32) activities. The chain is Phospholipase A1 (pldA) from Klebsiella pneumoniae.